The sequence spans 199 residues: Glycerol-3-phosphate acyltransferase (199 aa).

The next 5 membrane-spanning stretches (helical) occupy residues 3–23, 50–70, 78–98, 113–133, and 154–174; these read AAVW…GVLV, WGPA…AVLV, DWML…SVFL, LLFL…SVIL, and LALG…LLIF.

This sequence belongs to the PlsY family. In terms of assembly, probably interacts with PlsX.

Its subcellular location is the cell inner membrane. It catalyses the reaction an acyl phosphate + sn-glycerol 3-phosphate = a 1-acyl-sn-glycero-3-phosphate + phosphate. It functions in the pathway lipid metabolism; phospholipid metabolism. Its function is as follows. Catalyzes the transfer of an acyl group from acyl-phosphate (acyl-PO(4)) to glycerol-3-phosphate (G3P) to form lysophosphatidic acid (LPA). This enzyme utilizes acyl-phosphate as fatty acyl donor, but not acyl-CoA or acyl-ACP. In Thermus thermophilus (strain ATCC 27634 / DSM 579 / HB8), this protein is Glycerol-3-phosphate acyltransferase.